A 346-amino-acid chain; its full sequence is Probable alpha-1,2-galactosyltransferase gmh2 (346 aa).

At 1–11 the chain is on the cytoplasmic side; the sequence is MALMLSRIPRR. Residues 12–32 traverse the membrane as a helical; Signal-anchor for type II membrane protein segment; it reads FFFLFLTVGLIAGAFLYSLIY. Over 33–346 the chain is Lumenal; it reads FVDVDLVSKV…LWQKFYALID (314 aa). 3 N-linked (GlcNAc...) asparagine glycosylation sites follow: asparagine 64, asparagine 142, and asparagine 224.

This sequence belongs to the glycosyltransferase 34 family.

The protein localises to the golgi apparatus membrane. In Schizosaccharomyces pombe (strain 972 / ATCC 24843) (Fission yeast), this protein is Probable alpha-1,2-galactosyltransferase gmh2 (gmh2).